The sequence spans 201 residues: Probable nicotinate-nucleotide adenylyltransferase (201 aa).

This sequence belongs to the NadD family.

It catalyses the reaction nicotinate beta-D-ribonucleotide + ATP + H(+) = deamido-NAD(+) + diphosphate. Its pathway is cofactor biosynthesis; NAD(+) biosynthesis; deamido-NAD(+) from nicotinate D-ribonucleotide: step 1/1. Catalyzes the reversible adenylation of nicotinate mononucleotide (NaMN) to nicotinic acid adenine dinucleotide (NaAD). The sequence is that of Probable nicotinate-nucleotide adenylyltransferase from Clostridium botulinum (strain ATCC 19397 / Type A).